Here is a 114-residue protein sequence, read N- to C-terminus: Large ribosomal subunit protein uL22c (114 aa).

This sequence belongs to the universal ribosomal protein uL22 family. Part of the 50S ribosomal subunit.

The protein localises to the plastid. The protein resides in the chloroplast. Functionally, this protein binds specifically to 23S rRNA. The globular domain of the protein is located near the polypeptide exit tunnel on the outside of the subunit, while an extended beta-hairpin is found that lines the wall of the exit tunnel in the center of the 70S ribosome. The protein is Large ribosomal subunit protein uL22c (rpl22) of Gracilaria tenuistipitata (Red alga).